Consider the following 278-residue polypeptide: Large ribosomal subunit protein uL2 (278 aa).

2 disordered regions span residues 1 to 53 and 224 to 278; these read MAIR…TTRH and VVMN…NKKR. The segment covering 23–33 has biased composition (basic and acidic residues); sequence EITRSTPEKSL. Positions 258–267 are enriched in polar residues; it reads RNPNRYSNNM. The segment covering 269–278 has biased composition (basic residues); it reads VRRRRPNKKR.

This sequence belongs to the universal ribosomal protein uL2 family. In terms of assembly, part of the 50S ribosomal subunit. Forms a bridge to the 30S subunit in the 70S ribosome.

Functionally, one of the primary rRNA binding proteins. Required for association of the 30S and 50S subunits to form the 70S ribosome, for tRNA binding and peptide bond formation. It has been suggested to have peptidyltransferase activity; this is somewhat controversial. Makes several contacts with the 16S rRNA in the 70S ribosome. This is Large ribosomal subunit protein uL2 from Corynebacterium aurimucosum (strain ATCC 700975 / DSM 44827 / CIP 107346 / CN-1) (Corynebacterium nigricans).